We begin with the raw amino-acid sequence, 67 residues long: Large ribosomal subunit protein uL30 (67 aa).

This sequence belongs to the universal ribosomal protein uL30 family. As to quaternary structure, part of the 50S ribosomal subunit.

This is Large ribosomal subunit protein uL30 from Sinorhizobium medicae (strain WSM419) (Ensifer medicae).